A 301-amino-acid polypeptide reads, in one-letter code: Troponin T, cardiac muscle (301 aa).

2 stretches are compositionally biased toward acidic residues: residues 1–42 and 50–74; these read MSDL…EEEA and AETE…DGPV. Disordered regions lie at residues 1–99 and 125–223; these read MSDL…GERV and ENRK…KKKK. N-acetylserine is present on Ser2. Phosphoserine; by CK2 is present on Ser2. Residues 82 to 93 are compositionally biased toward pro residues; that stretch reads RPFMPNLVPPKI. Basic and acidic residues-rich tracts occupy residues 125-186 and 206-223; these read ENRK…DEAR and QTER…KKKK. Thr207 is subject to Phosphothreonine; by PKC/PRKCA. A Phosphoserine; by PKC/PRKCA modification is found at Ser211. At Thr216 the chain carries Phosphothreonine; by PKC/PRKCA and RAF1. Thr297 is modified (phosphothreonine; by PKC/PRKCA).

It belongs to the troponin T family. Binds with troponins I and C to make the thin-filament regulatory complex, troponin. In terms of processing, phosphorylation at Thr-216 by PRKCA induces significant reduction in myofilament calcium sensitivity and actomyosin ATPase activity. The major isoform in adult heart is CTNT4.

In terms of biological role, troponin T is the tropomyosin-binding subunit of troponin, the thin filament regulatory complex which confers calcium-sensitivity to striated muscle actomyosin ATPase activity. The polypeptide is Troponin T, cardiac muscle (TNNT2) (Oryctolagus cuniculus (Rabbit)).